The sequence spans 233 residues: LAIPPFNYPVNLAVSKLAPALMAGNTVVLKPPSQGVVAGIHMIKCFQAAGLPAGTVNLVTGKGSEIGDFLTTHPAVNCISFTGGDTGIAISRKAGMVPLQMELGGKDACIVCSDADLDLAATHIIKGGFSYSGQRCTAVKVVLVMQDIADELVRKVHAGVQKLKVGRPEDNADITAVVSEGSANFIQGLVEDAKAKGATFLTDWKREGNLLWPVLLDNVTADMRIAWEEPFGP.

Asn7–Tyr8 provides a ligand contact to substrate. Residues Lys30 and Ser33 each contribute to the NADP(+) site. Gly83–Gly87 is an NAD(+) binding site. The Proton acceptor role is filled by Glu102. Substrate is bound at residue Arg135–Thr137. Residue Cys136 is the Nucleophile of the active site. NADP(+)-binding residues include Glu180 and Glu229.

The protein belongs to the aldehyde dehydrogenase family.

It is found in the cytoplasm. The enzyme catalyses D-glyceraldehyde 3-phosphate + NADP(+) + H2O = (2R)-3-phosphoglycerate + NADPH + 2 H(+). In terms of biological role, important as a means of generating NADPH for biosynthetic reactions. The chain is NADP-dependent glyceraldehyde-3-phosphate dehydrogenase (GapN) from Scenedesmus vacuolatus (Green alga).